A 198-amino-acid chain; its full sequence is Putative protein-methionine-sulfoxide reductase subunit YedZ1 (198 aa).

4 helical membrane-spanning segments follow: residues 12 to 32 (WLRV…MSGW), 63 to 83 (FAAM…NIFS), 124 to 144 (AAYL…LVLW), and 167 to 187 (FIGM…VALV).

Belongs to the HupC/HyaC/HydC family.

It is found in the cell inner membrane. Its function is as follows. Part of the YedY1-YedZ1 system that may repair oxidized proteins containing methionine sulfoxide residues (Met-O). This is Putative protein-methionine-sulfoxide reductase subunit YedZ1 from Azospira oryzae (strain ATCC BAA-33 / DSM 13638 / PS) (Dechlorosoma suillum).